A 145-amino-acid chain; its full sequence is Procyclic form-specific polypeptide B-alpha (145 aa).

Positions 1 to 27 (MAPRSLYLLAVLLFSANLFAGVGFAAA) are cleaved as a signal peptide. The tract at residues 28-127 (AEGPEDKGLT…PEPEPGAATL (100 aa)) is disordered. Basic and acidic residues predominate over residues 31–52 (PEDKGLTKGGKGKGEKGTKVGA). Tandem repeats lie at residues 59–60 (DP), 61–62 (DP), 63–64 (EP), 65–66 (EP), 67–68 (EP), 69–70 (EP), 71–72 (EP), 73–74 (EP), 75–76 (EP), 77–78 (EP), 79–80 (EP), 81–82 (EP), 83–84 (EP), 85–86 (EP), 87–88 (EP), 89–90 (EP), 91–92 (EP), 93–94 (EP), 95–96 (EP), 97–98 (EP), 99–100 (EP), 101–102 (EP), 103–104 (EP), 105–106 (EP), 107–108 (EP), 109–110 (EP), 111–112 (EP), 113–114 (EP), 115–116 (EP), 117–118 (EP), 119–120 (EP), and 121–122 (EP). Positions 59–122 (DPDPEPEPEP…EPEPEPEPEP (64 aa)) are 32 X 2 AA tandem repeats of [DE]-P. The segment covering 60-120 (PDPEPEPEPE…EPEPEPEPEP (61 aa)) has biased composition (acidic residues). Residue G123 is the site of GPI-anchor amidated glycine attachment. Residues 124-145 (AATLKSVALPFAIAAAALVAAF) constitute a propeptide that is removed on maturation.

Its subcellular location is the cell membrane. Functionally, major surface antigen of procyclic forms. This chain is Procyclic form-specific polypeptide B-alpha (PARPB), found in Trypanosoma brucei brucei.